A 687-amino-acid chain; its full sequence is E3 ubiquitin-protein ligase RNF19B (687 aa).

Residues 1–294 (MRLRNDCLVR…VCGCEFCWLC (294 aa)) are required for ubiquitin ligase activity and for protection against staurosporin-induced cell death. The segment at 53–88 (RTRAAPEPSVPSPPPSPPPPPPPPVSVPPPPSSPGG) is disordered. The segment covering 60-85 (PSVPSPPPSPPPPPPPPVSVPPPPSS) has biased composition (pro residues). The TRIAD supradomain stretch occupies residues 91-313 (SLIECPLCLV…LSPSGCTFWG (223 aa)). Zn(2+) contacts are provided by cysteine 95, cysteine 98, cysteine 118, cysteine 121, cysteine 182, cysteine 187, cysteine 204, cysteine 209, cysteine 214, cysteine 217, histidine 222, cysteine 227, cysteine 263, and cysteine 266. Residues 95–144 (CPLCLVRQPPEEIPELLSCRHRSCLRCLRQYLRIEICESRVNLRCPECAE) form an RING-type 1 zinc finger. The IBR-type zinc finger occupies 161 to 227 (TRKYEEFLLR…KHVWHPNQTC (67 aa)). The segment at 263–294 (CPRCSAYIIKMNDGSCNHMTCSVCGCEFCWLC) adopts an RING-type 2; atypical zinc-finger fold. Residue cysteine 278 is part of the active site. Zn(2+) is bound by residues cysteine 283, cysteine 286, cysteine 291, cysteine 294, histidine 302, and cysteine 309. 2 consecutive transmembrane segments (helical) span residues 330–350 (LIGA…AMVI) and 391–411 (VVAA…VYGV). The segment at 618-662 (SIRSDLESSDAQSDDVPDLASEEYDSPHLFPPSPSNALQESPPHR) is disordered. Positions 629–641 (QSDDVPDLASEEY) are enriched in acidic residues.

Belongs to the RBR family. RNF19 subfamily. As to quaternary structure, interacts with UBE2L3, UBE2L6 and UCKL1.

Its subcellular location is the cytoplasmic granule membrane. The protein resides in the endoplasmic reticulum membrane. It catalyses the reaction [E2 ubiquitin-conjugating enzyme]-S-ubiquitinyl-L-cysteine + [acceptor protein]-L-lysine = [E2 ubiquitin-conjugating enzyme]-L-cysteine + [acceptor protein]-N(6)-ubiquitinyl-L-lysine.. It functions in the pathway protein modification; protein ubiquitination. In terms of biological role, E3 ubiquitin-protein ligase which accepts ubiquitin from E2 ubiquitin-conjugating enzymes UBE2L3 and UBE2L6 in the form of a thioester and then directly transfers the ubiquitin to targeted substrates, such as UCKL1. Involved in the cytolytic activity of natural killer cells and cytotoxic T-cells. Protects against staurosporin-induced cell death. The chain is E3 ubiquitin-protein ligase RNF19B (rnf19b) from Xenopus laevis (African clawed frog).